Reading from the N-terminus, the 661-residue chain is Peroxisomal acyl-coenzyme A oxidase 1 (661 aa).

Residues Lys89 and Lys90 each carry the N6-succinyllysine modification. Thr139 is an FAD binding site. Lys159 is modified (N6-succinyllysine). Residue Gly178 coordinates FAD. The residue at position 216 (Lys216) is an N6-acetyllysine. Lys241 is subject to N6-succinyllysine. An N6-acetyllysine mark is found at Lys255, Lys267, and Lys272. Residue Lys349 is modified to N6-succinyllysine. The active-site Proton acceptor is Glu421. Residues Lys437, Lys446, Lys512, and Lys637 each carry the N6-acetyllysine; alternate modification. N6-succinyllysine; alternate is present on residues Lys437, Lys446, Lys512, and Lys637. At Lys643 the chain carries N6-succinyllysine. Residue Ser649 is modified to Phosphoserine. Lys652 carries the N6-acetyllysine modification. At Lys655 the chain carries N6-succinyllysine. The Microbody targeting signal signature appears at 659 to 661; sequence SKL.

Belongs to the acyl-CoA oxidase family. In terms of assembly, homodimer. Interacts with LONP2. FAD serves as cofactor.

The protein resides in the peroxisome. The enzyme catalyses a 2,3-saturated acyl-CoA + O2 = a (2E)-enoyl-CoA + H2O2. The catalysed reaction is hexadecanoyl-CoA + O2 = (2E)-hexadecenoyl-CoA + H2O2. It carries out the reaction dodecanoyl-CoA + O2 = (2E)-dodecenoyl-CoA + H2O2. It catalyses the reaction octanoyl-CoA + O2 = (2E)-octenoyl-CoA + H2O2. The enzyme catalyses decanoyl-CoA + O2 = (2E)-decenoyl-CoA + H2O2. The catalysed reaction is tetradecanoyl-CoA + O2 = (2E)-tetradecenoyl-CoA + H2O2. It carries out the reaction hexadecanedioyl-CoA + O2 = (2E)-hexadecenedioyl-CoA + H2O2. It catalyses the reaction tetracosanoyl-CoA + O2 = (2E)-tetracosenoyl-CoA + H2O2. The enzyme catalyses glutaryl-CoA + O2 = (2E)-glutaconyl-CoA + H2O2. The catalysed reaction is hexanoyl-CoA + O2 = (2E)-hexenoyl-CoA + H2O2. It carries out the reaction octadecanoyl-CoA + O2 = (2E)-octadecenoyl-CoA + H2O2. It catalyses the reaction (5Z,8Z,11Z,14Z,17Z)-eicosapentaenoyl-CoA + O2 = (2E,5Z,8Z,11Z,14Z,17Z)-icosahexaenoyl-CoA + H2O2. The enzyme catalyses (6Z,9Z,12Z,15Z,18Z,21Z)-tetracosahexaenoyl-CoA + O2 = (2E,6Z,9Z,12Z,15Z,18Z,21Z)-tetracosaheptaenoyl-CoA + H2O2. It functions in the pathway lipid metabolism; peroxisomal fatty acid beta-oxidation. Involved in the initial and rate-limiting step of peroxisomal beta-oxidation of straight-chain saturated and unsaturated very-long-chain fatty acids. Catalyzes the desaturation of fatty acyl-CoAs such as palmitoyl-CoA (hexadecanoyl-CoA) to 2-trans-enoyl-CoAs ((2E)-enoyl-CoAs) such as (2E)-hexadecenoyl-CoA, and donates electrons directly to molecular oxygen (O(2)), thereby producing hydrogen peroxide (H(2)O(2)). Isoform 2 shows higher activity with hexadecanoyl-CoA as substrate than isoform 1. This Phascolarctos cinereus (Koala) protein is Peroxisomal acyl-coenzyme A oxidase 1 (ACOX1).